The primary structure comprises 433 residues: Aspartate--tRNA(Asp/Asn) ligase (433 aa).

Glu-167 serves as a coordination point for L-aspartate. Residues 189–192 (QLFK) are aspartate. Position 211 (Arg-211) interacts with L-aspartate. Residues 211–213 (RAE), 219–221 (RHL), and Glu-356 each bind ATP. Positions 356 and 359 each coordinate Mg(2+). L-aspartate-binding residues include Ser-359 and Arg-363. 404–407 (GGER) contributes to the ATP binding site.

It belongs to the class-II aminoacyl-tRNA synthetase family. Type 2 subfamily. Homodimer. Requires Mg(2+) as cofactor.

It localises to the cytoplasm. The enzyme catalyses tRNA(Asx) + L-aspartate + ATP = L-aspartyl-tRNA(Asx) + AMP + diphosphate. Aspartyl-tRNA synthetase with relaxed tRNA specificity since it is able to aspartylate not only its cognate tRNA(Asp) but also tRNA(Asn). Reaction proceeds in two steps: L-aspartate is first activated by ATP to form Asp-AMP and then transferred to the acceptor end of tRNA(Asp/Asn). In Natronomonas pharaonis (strain ATCC 35678 / DSM 2160 / CIP 103997 / JCM 8858 / NBRC 14720 / NCIMB 2260 / Gabara) (Halobacterium pharaonis), this protein is Aspartate--tRNA(Asp/Asn) ligase.